Here is a 408-residue protein sequence, read N- to C-terminus: UPF0761 membrane protein azo3165 (408 aa).

Transmembrane regions (helical) follow at residues 29–49, 92–112, 131–151, 172–192, 197–217, 220–240, and 241–261; these read LAFT…GVFG, LTLI…ATIE, ITVS…SVVA, IAAA…LYYA, PVRL…FLLM, GLGL…TFAA, and LPIF…GALI.

It belongs to the UPF0761 family.

It is found in the cell inner membrane. The polypeptide is UPF0761 membrane protein azo3165 (Azoarcus sp. (strain BH72)).